The sequence spans 198 residues: FMN-dependent NADH:quinone oxidoreductase 2 (198 aa).

Residue 136–139 (SRGG) participates in FMN binding.

This sequence belongs to the azoreductase type 1 family. Homodimer. The cofactor is FMN.

It carries out the reaction 2 a quinone + NADH + H(+) = 2 a 1,4-benzosemiquinone + NAD(+). It catalyses the reaction N,N-dimethyl-1,4-phenylenediamine + anthranilate + 2 NAD(+) = 2-(4-dimethylaminophenyl)diazenylbenzoate + 2 NADH + 2 H(+). Functionally, quinone reductase that provides resistance to thiol-specific stress caused by electrophilic quinones. Also exhibits azoreductase activity. Catalyzes the reductive cleavage of the azo bond in aromatic azo compounds to the corresponding amines. In Clostridium perfringens (strain 13 / Type A), this protein is FMN-dependent NADH:quinone oxidoreductase 2.